The primary structure comprises 130 residues: Small ribosomal subunit protein uS11c (130 aa).

This sequence belongs to the universal ribosomal protein uS11 family. In terms of assembly, part of the 30S ribosomal subunit.

Its subcellular location is the plastid. It localises to the chloroplast. This is Small ribosomal subunit protein uS11c from Pinus thunbergii (Japanese black pine).